The primary structure comprises 557 residues: Eudesmanediol synthase (557 aa).

Aspartate 310 and aspartate 314 together coordinate Mg(2+). The substrate site is built by aspartate 310, aspartate 314, and arginine 450. A DDXXD motif motif is present at residues 310 to 314 (DDTFD). Residues asparagine 453 and serine 457 each contribute to the Mg(2+) site.

The protein belongs to the terpene synthase family. As to quaternary structure, monomer. Requires Mg(2+) as cofactor. The cofactor is Mn(2+).

The protein localises to the cytoplasm. It carries out the reaction (2E,6E)-farnesyl diphosphate + 2 H2O = 7-epi-ent-eudesmane-5,11-diol + diphosphate. Its pathway is secondary metabolite biosynthesis; terpenoid biosynthesis. Its function is as follows. Component of the volatile terpenes biosynthesis pathways. Dihydroxylated sesquiterpenoid synthase that generates dually hydroxylated products directly from (E,E)-farnesyl diphosphate, primarily eudesmane-2,11-diol, along with two closely related structural isomers. The protein is Eudesmanediol synthase of Zea mays (Maize).